A 108-amino-acid chain; its full sequence is Small ribosomal subunit protein bS6 (108 aa).

The protein belongs to the bacterial ribosomal protein bS6 family.

Functionally, binds together with bS18 to 16S ribosomal RNA. The chain is Small ribosomal subunit protein bS6 from Trichormus variabilis (strain ATCC 29413 / PCC 7937) (Anabaena variabilis).